The following is a 420-amino-acid chain: Glutamate dehydrogenase (420 aa).

The active site involves Lys105. 220–226 contacts NAD(+); that stretch reads GYGNAGY.

The protein belongs to the Glu/Leu/Phe/Val dehydrogenases family. Homohexamer.

It is found in the cytoplasm. It catalyses the reaction L-glutamate + NAD(+) + H2O = 2-oxoglutarate + NH4(+) + NADH + H(+). It carries out the reaction L-glutamate + NADP(+) + H2O = 2-oxoglutarate + NH4(+) + NADPH + H(+). The sequence is that of Glutamate dehydrogenase (gdhA) from Pyrococcus abyssi (strain GE5 / Orsay).